The following is a 275-amino-acid chain: Phosphate import ATP-binding protein PstB 3 (275 aa).

Residues 1–26 (MATQETDDSLISTDVQTDATERGDQP) are disordered. Positions 9 to 18 (SLISTDVQTD) are enriched in polar residues. The ABC transporter domain maps to 31 to 270 (VETKHLDVHY…PEDDRVEDYI (240 aa)). Position 63 to 70 (63 to 70 (GPSGCGKS)) interacts with ATP.

It belongs to the ABC transporter superfamily. Phosphate importer (TC 3.A.1.7) family. As to quaternary structure, the complex is composed of two ATP-binding proteins (PstB), two transmembrane proteins (PstC and PstA) and a solute-binding protein (PstS).

It is found in the cell membrane. It carries out the reaction phosphate(out) + ATP + H2O = ADP + 2 phosphate(in) + H(+). Its function is as follows. Part of the ABC transporter complex PstSACB involved in phosphate import. Responsible for energy coupling to the transport system. This chain is Phosphate import ATP-binding protein PstB 3, found in Natronomonas pharaonis (strain ATCC 35678 / DSM 2160 / CIP 103997 / JCM 8858 / NBRC 14720 / NCIMB 2260 / Gabara) (Halobacterium pharaonis).